We begin with the raw amino-acid sequence, 438 residues long: Adenosylhomocysteinase (438 aa).

Positions 61, 137, and 162 each coordinate substrate. 163-165 (TTT) lines the NAD(+) pocket. Substrate is bound by residues lysine 192 and aspartate 196. NAD(+) contacts are provided by residues asparagine 197, 226-231 (GYGDVG), glutamate 249, asparagine 284, 305-307 (IGH), and asparagine 352.

This sequence belongs to the adenosylhomocysteinase family. NAD(+) is required as a cofactor.

The protein resides in the cytoplasm. The catalysed reaction is S-adenosyl-L-homocysteine + H2O = L-homocysteine + adenosine. The protein operates within amino-acid biosynthesis; L-homocysteine biosynthesis; L-homocysteine from S-adenosyl-L-homocysteine: step 1/1. May play a key role in the regulation of the intracellular concentration of adenosylhomocysteine. The chain is Adenosylhomocysteinase from Christiangramia forsetii (strain DSM 17595 / CGMCC 1.15422 / KT0803) (Gramella forsetii).